A 113-amino-acid polypeptide reads, in one-letter code: Prefoldin subunit beta (113 aa).

It belongs to the prefoldin subunit beta family. Heterohexamer of two alpha and four beta subunits.

Its subcellular location is the cytoplasm. In terms of biological role, molecular chaperone capable of stabilizing a range of proteins. Seems to fulfill an ATP-independent, HSP70-like function in archaeal de novo protein folding. This chain is Prefoldin subunit beta, found in Methanococcus maripaludis (strain DSM 14266 / JCM 13030 / NBRC 101832 / S2 / LL).